A 47-amino-acid chain; its full sequence is uncharacterized protein (47 aa).

The N-terminal stretch at 1–25 (MAHKCASAKLLSGIMALLFNGKSLL) is a signal peptide.

This is an uncharacterized protein from Saccharomyces cerevisiae (strain ATCC 204508 / S288c) (Baker's yeast).